We begin with the raw amino-acid sequence, 193 residues long: NADH-quinone oxidoreductase subunit B (193 aa).

Positions 72, 73, 137, and 167 each coordinate [4Fe-4S] cluster.

Belongs to the complex I 20 kDa subunit family. In terms of assembly, NDH-1 is composed of 14 different subunits. Subunits NuoB, C, D, E, F, and G constitute the peripheral sector of the complex. [4Fe-4S] cluster serves as cofactor.

Its subcellular location is the cell inner membrane. The enzyme catalyses a quinone + NADH + 5 H(+)(in) = a quinol + NAD(+) + 4 H(+)(out). In terms of biological role, NDH-1 shuttles electrons from NADH, via FMN and iron-sulfur (Fe-S) centers, to quinones in the respiratory chain. The immediate electron acceptor for the enzyme in this species is believed to be ubiquinone. Couples the redox reaction to proton translocation (for every two electrons transferred, four hydrogen ions are translocated across the cytoplasmic membrane), and thus conserves the redox energy in a proton gradient. The sequence is that of NADH-quinone oxidoreductase subunit B from Bradyrhizobium sp. (strain ORS 278).